Reading from the N-terminus, the 135-residue chain is Interleukin-4 (135 aa).

The signal sequence occupies residues 1–24 (MGLTSQLIPVLVCLLVCTSHFVHG). 3 disulfides stabilise this stretch: cysteine 27-cysteine 135, cysteine 48-cysteine 85, and cysteine 70-cysteine 105. A glycan (N-linked (GlcNAc...) asparagine) is linked at asparagine 62.

This sequence belongs to the IL-4/IL-13 family.

It is found in the secreted. Participates in at least several B-cell activation processes as well as of other cell types. It is a costimulator of DNA-synthesis. It induces the expression of class II MHC molecules on resting B-cells. It enhances both secretion and cell surface expression of IgE and IgG1. It also regulates the expression of the low affinity Fc receptor for IgE (CD23) on both lymphocytes and monocytes. Positively regulates IL31RA expression in macrophages. Stimulates autophagy in dendritic cells by interfering with mTORC1 signaling and through the induction of RUFY4. This is Interleukin-4 (IL4) from Bos taurus (Bovine).